Here is a 425-residue protein sequence, read N- to C-terminus: Tyrosine--tRNA ligase (425 aa).

Tyr33 is a binding site for L-tyrosine. The short motif at 38–47 (PTADSLHLGN) is the 'HIGH' region element. Tyr170 and Gln174 together coordinate L-tyrosine. The 'KMSKS' region signature appears at 230-234 (KFGKS). Lys233 provides a ligand contact to ATP. The S4 RNA-binding domain occupies 356–422 (KKLIDLLVET…GKKNKMIIRL (67 aa)).

The protein belongs to the class-I aminoacyl-tRNA synthetase family. TyrS type 1 subfamily. In terms of assembly, homodimer.

It is found in the cytoplasm. It catalyses the reaction tRNA(Tyr) + L-tyrosine + ATP = L-tyrosyl-tRNA(Tyr) + AMP + diphosphate + H(+). Functionally, catalyzes the attachment of tyrosine to tRNA(Tyr) in a two-step reaction: tyrosine is first activated by ATP to form Tyr-AMP and then transferred to the acceptor end of tRNA(Tyr). This Protochlamydia amoebophila (strain UWE25) protein is Tyrosine--tRNA ligase.